Reading from the N-terminus, the 174-residue chain is ATP-dependent protease subunit HslV (174 aa).

The active site involves T2. 3 residues coordinate Na(+): G157, C160, and T163.

It belongs to the peptidase T1B family. HslV subfamily. A double ring-shaped homohexamer of HslV is capped on each side by a ring-shaped HslU homohexamer. The assembly of the HslU/HslV complex is dependent on binding of ATP.

It localises to the cytoplasm. The catalysed reaction is ATP-dependent cleavage of peptide bonds with broad specificity.. Allosterically activated by HslU binding. In terms of biological role, protease subunit of a proteasome-like degradation complex believed to be a general protein degrading machinery. This Shewanella piezotolerans (strain WP3 / JCM 13877) protein is ATP-dependent protease subunit HslV.